The following is a 544-amino-acid chain: Chaperonin GroEL 2 (544 aa).

Residues 29-32, 86-90, G413, 479-481, and D495 each bind ATP; these read TLGP, DGTTT, and NAA.

The protein belongs to the chaperonin (HSP60) family. As to quaternary structure, forms a cylinder of 14 subunits composed of two heptameric rings stacked back-to-back. Interacts with the co-chaperonin GroES.

The protein resides in the cytoplasm. It catalyses the reaction ATP + H2O + a folded polypeptide = ADP + phosphate + an unfolded polypeptide.. Functionally, together with its co-chaperonin GroES, plays an essential role in assisting protein folding. The GroEL-GroES system forms a nano-cage that allows encapsulation of the non-native substrate proteins and provides a physical environment optimized to promote and accelerate protein folding. The sequence is that of Chaperonin GroEL 2 from Prochlorococcus marinus (strain MIT 9313).